A 919-amino-acid chain; its full sequence is Translation initiation factor IF-2 (919 aa).

Residues 93–107 show a composition bias toward basic and acidic residues; that stretch reads MGKALPEEVPEKIAP. 2 disordered regions span residues 93-145 and 158-279; these read MGKA…PAEP and KIQP…RKGE. Residues 136–145 show a composition bias toward pro residues; that stretch reads LAPPEKPAEP. The span at 158–171 shows a compositional bias: basic and acidic residues; it reads KIQPPEKFAEEPLK. A compositionally biased stretch (low complexity) spans 172-193; it reads KPAVIEPEKAAAAPKAVPGEAK. Basic and acidic residues-rich tracts occupy residues 194-203 and 256-279; these read PLPRTERVQE and GAPK…RKGE. The tr-type G domain maps to 420-589; sequence PRAPVVTIMG…LLQADVLELK (170 aa). The segment at 429-436 is G1; the sequence is GHVDHGKT. 429–436 contributes to the GTP binding site; the sequence is GHVDHGKT. A G2 region spans residues 454 to 458; sequence GITQA. The segment at 475 to 478 is G3; sequence DTPG. Residues 475–479 and 529–532 each bind GTP; these read DTPGH and NKID. The interval 529-532 is G4; sequence NKID. The interval 565-567 is G5; that stretch reads SAK.

The protein belongs to the TRAFAC class translation factor GTPase superfamily. Classic translation factor GTPase family. IF-2 subfamily.

It localises to the cytoplasm. Its function is as follows. One of the essential components for the initiation of protein synthesis. Protects formylmethionyl-tRNA from spontaneous hydrolysis and promotes its binding to the 30S ribosomal subunits. Also involved in the hydrolysis of GTP during the formation of the 70S ribosomal complex. In Syntrophus aciditrophicus (strain SB), this protein is Translation initiation factor IF-2.